Consider the following 378-residue polypeptide: Mannitol-1-phosphate 5-dehydrogenase (378 aa).

4–15 provides a ligand contact to NAD(+); it reads SVHFGAGNIGRG.

It belongs to the mannitol dehydrogenase family.

The enzyme catalyses D-mannitol 1-phosphate + NAD(+) = beta-D-fructose 6-phosphate + NADH + H(+). This is Mannitol-1-phosphate 5-dehydrogenase from Streptococcus pneumoniae (strain Hungary19A-6).